Consider the following 216-residue polypeptide: SPbeta prophage-derived uncharacterized protein YomX (216 aa).

This is SPbeta prophage-derived uncharacterized protein YomX (yomX) from Bacillus subtilis (strain 168).